We begin with the raw amino-acid sequence, 371 residues long: Phospho-N-acetylmuramoyl-pentapeptide-transferase (371 aa).

The next 10 membrane-spanning stretches (helical) occupy residues 25–45, 79–99, 104–124, 139–159, 179–199, 210–230, 247–267, 274–294, 299–319, and 348–368; these read YLTF…VAMG, TMGG…FADL, VWVV…DDYA, KLIA…IFAP, LVIN…AGFS, GLAI…AYLV, VGEL…FLWY, IFMG…IAVC, LVLG…MIQV, and TVVI…LATL.

The protein belongs to the glycosyltransferase 4 family. MraY subfamily. Mg(2+) is required as a cofactor.

The protein resides in the cell inner membrane. It carries out the reaction UDP-N-acetyl-alpha-D-muramoyl-L-alanyl-gamma-D-glutamyl-meso-2,6-diaminopimeloyl-D-alanyl-D-alanine + di-trans,octa-cis-undecaprenyl phosphate = di-trans,octa-cis-undecaprenyl diphospho-N-acetyl-alpha-D-muramoyl-L-alanyl-D-glutamyl-meso-2,6-diaminopimeloyl-D-alanyl-D-alanine + UMP. The protein operates within cell wall biogenesis; peptidoglycan biosynthesis. Functionally, catalyzes the initial step of the lipid cycle reactions in the biosynthesis of the cell wall peptidoglycan: transfers peptidoglycan precursor phospho-MurNAc-pentapeptide from UDP-MurNAc-pentapeptide onto the lipid carrier undecaprenyl phosphate, yielding undecaprenyl-pyrophosphoryl-MurNAc-pentapeptide, known as lipid I. This chain is Phospho-N-acetylmuramoyl-pentapeptide-transferase, found in Caulobacter sp. (strain K31).